Reading from the N-terminus, the 194-residue chain is NAD(P)H-quinone oxidoreductase subunit I (194 aa).

4Fe-4S ferredoxin-type domains follow at residues 55-84 (GRIH…VDWE) and 95-124 (NHYS…MTEE). Positions 64, 67, 70, 74, 104, 107, 110, and 114 each coordinate [4Fe-4S] cluster. Residues 173–194 (DLPANAPRPGARPEDLVEKTEA) form a disordered region. A compositionally biased stretch (basic and acidic residues) spans 183 to 194 (ARPEDLVEKTEA).

Belongs to the complex I 23 kDa subunit family. NDH-1 is composed of at least 11 different subunits. It depends on [4Fe-4S] cluster as a cofactor.

It is found in the cellular thylakoid membrane. It catalyses the reaction a plastoquinone + NADH + (n+1) H(+)(in) = a plastoquinol + NAD(+) + n H(+)(out). The catalysed reaction is a plastoquinone + NADPH + (n+1) H(+)(in) = a plastoquinol + NADP(+) + n H(+)(out). Functionally, NDH-1 shuttles electrons from an unknown electron donor, via FMN and iron-sulfur (Fe-S) centers, to quinones in the respiratory and/or the photosynthetic chain. The immediate electron acceptor for the enzyme in this species is believed to be plastoquinone. Couples the redox reaction to proton translocation, and thus conserves the redox energy in a proton gradient. In Nostoc sp. (strain PCC 7120 / SAG 25.82 / UTEX 2576), this protein is NAD(P)H-quinone oxidoreductase subunit I.